A 394-amino-acid polypeptide reads, in one-letter code: Elongation factor Tu (394 aa).

A tr-type G domain is found at 10–204 (KPHVNVGTIG…ALDSYIPEPE (195 aa)). Residues 19–26 (GHVDHGKT) are G1. A GTP-binding site is contributed by 19 to 26 (GHVDHGKT). Thr-26 is a Mg(2+) binding site. The tract at residues 60-64 (GITIA) is G2. Residues 81–84 (DCPG) form a G3 region. GTP-binding positions include 81-85 (DCPGH) and 136-139 (NKCD). Residues 136–139 (NKCD) form a G4 region. Positions 174–176 (SAL) are G5.

Belongs to the TRAFAC class translation factor GTPase superfamily. Classic translation factor GTPase family. EF-Tu/EF-1A subfamily. In terms of assembly, monomer.

It localises to the cytoplasm. It catalyses the reaction GTP + H2O = GDP + phosphate + H(+). GTP hydrolase that promotes the GTP-dependent binding of aminoacyl-tRNA to the A-site of ribosomes during protein biosynthesis. The polypeptide is Elongation factor Tu (Vibrio campbellii (strain ATCC BAA-1116)).